The sequence spans 310 residues: Thioredoxin reductase (310 aa).

35–42 provides a ligand contact to FAD; sequence ERGMPGGQ. The cysteines at positions 134 and 137 are disulfide-linked. 277-286 provides a ligand contact to FAD; it reads DVRDKGLRQI.

Belongs to the class-II pyridine nucleotide-disulfide oxidoreductase family. Homodimer. FAD is required as a cofactor.

It is found in the cytoplasm. The catalysed reaction is [thioredoxin]-dithiol + NADP(+) = [thioredoxin]-disulfide + NADPH + H(+). This is Thioredoxin reductase (trxB) from Staphylococcus epidermidis (strain ATCC 35984 / DSM 28319 / BCRC 17069 / CCUG 31568 / BM 3577 / RP62A).